The following is a 1378-amino-acid chain: MAQTQTFNGRRRVRKFFGKIPEVAEMPNLIEVQKASYDQFLMVDEPKGGRPDEGLQAVFKSVFPISDFSGSSMLEFVKYEFEGPKFDVDECRQRDLTYAAPLKVTLRLIVFDIDEDTGAKSIKDIKEQDVYMGDMPLMTLNGTFIVNGTERVIVSQMHRSPGVFFDHDKGKSHSSGKLLFAARVIPYRGSWLDIEFDSKDVVHARIDRRRKIPVTSLLMALGMDGEEILSTFYNKITYVRAGDHWRIPFNVERFRGLKAVGDLVDADTGEIVVEAGKKITARQARQLGEKGLKAIKATDEDLLGNYLAEDIVNYATGEIFLEAGDEIDEKTLKVLLGTGEQEIKVLDIDHVNVGAYIRNTLNVDKNESRQDALFDIYRVMRPGEPPTLETAEAMFNSLFFDSERYDLSAVGRVKMNMRLELKAEDTVRVLRKEDILAVVKTLVELRDGKGEIDDIDNLGNRRVRSVGELMENQYRVGLLRMERAIKERMSSIEIDTVMPQDLINAKPAAAAVREFFGSSQLSQFMDQTNPLSEITHKRRLSALGPGGLTRERAGFEVRDVHPTHYGRICPIETPEGPNIGLINSLATFARVNKYGFIESPYRKIVDGKLTNDVVYLSAMEEAKHHVAQANAELDKNGGFVDEFVICRSAGEVMMAPRENVDLMDVSPKQMVSVAAALIPFLENDDANRALMGSNMQRQAVPLVRAEAPFVGTGMEPIVARDSGAAIGARRGGIVDQVDATRIVIRATEDLDPGKSGVDIYRLMKFQRSNQNTCINQRPLVRMGDRVNKGDIIADGPSTELGDLALGRNVLVAFMPWNGYNYEDSILLSERIVADDVFTSIHIEEFEVMARDTKLGPEEITRDIPNVSEEALKNLDEAGIVYIGAEVQPGDILVGKITPKGESPMTPEEKLLRAIFGEKASDVRDTSMRMPPGTFGTVVEVRVFNRHGVEKDERAMAIEREEIERLAKDRDDEQAILDRNVYARLSDVLVGKEAIAGPKGFKKGSTLSKDTLDEYPRSQWWQFAVENEKLQSELEALRGQYDDSKKALEQRFMDKVEKVQRGDEMPPGVMKMVKVFVAVKRKMQPGDKMAGRHGNKGVVSRIVPVEDMPFLEDGTHADIVLNPLGVPSRMNVGQILETHLGWACAGMGKKIGELIDTYKAAGDIKPLRKTLESFMPANDRNEPIREYDDESIVRLSEQMRRGVSIATPVFDGAHEADINIMLEQAGLHTSGQSQLYDGRTGEPFDRKVTMGYIYMLKLHHLVDDKIHARSIGPYSLVTQQPLGGKAQFGGQRFGEMEVWALEAYGAAYTLQEMLTVKSDDVAGRTKVYEAIVRGDDTFEAGIPESFNVLVKEMRSLGLNVELENTKLDDAPVRLPDAAE.

It belongs to the RNA polymerase beta chain family. As to quaternary structure, the RNAP catalytic core consists of 2 alpha, 1 beta, 1 beta' and 1 omega subunit. When a sigma factor is associated with the core the holoenzyme is formed, which can initiate transcription.

The enzyme catalyses RNA(n) + a ribonucleoside 5'-triphosphate = RNA(n+1) + diphosphate. DNA-dependent RNA polymerase catalyzes the transcription of DNA into RNA using the four ribonucleoside triphosphates as substrates. The protein is DNA-directed RNA polymerase subunit beta of Mesorhizobium japonicum (strain LMG 29417 / CECT 9101 / MAFF 303099) (Mesorhizobium loti (strain MAFF 303099)).